We begin with the raw amino-acid sequence, 552 residues long: Glucose-6-phosphate isomerase (552 aa).

The Proton donor role is filled by glutamate 357. Catalysis depends on residues histidine 388 and lysine 516. The interval 525–552 (ELASTKPPKHDSSTNALIERYRTRGCRS) is disordered.

The protein belongs to the GPI family.

The protein resides in the cytoplasm. It catalyses the reaction alpha-D-glucose 6-phosphate = beta-D-fructose 6-phosphate. The protein operates within carbohydrate biosynthesis; gluconeogenesis. It participates in carbohydrate degradation; glycolysis; D-glyceraldehyde 3-phosphate and glycerone phosphate from D-glucose: step 2/4. In terms of biological role, catalyzes the reversible isomerization of glucose-6-phosphate to fructose-6-phosphate. This Laribacter hongkongensis (strain HLHK9) protein is Glucose-6-phosphate isomerase.